The primary structure comprises 237 residues: Uridylate kinase (237 aa).

9-12 (KLSG) contacts ATP. Residues 17–22 (GSQGYG) form an involved in allosteric activation by GTP region. Gly-51 contacts UMP. Residues Gly-52 and Arg-56 each coordinate ATP. UMP contacts are provided by residues Asp-71 and 132 to 139 (CGNPFFTT). ATP-binding residues include Thr-159, Tyr-165, and Asp-168.

Belongs to the UMP kinase family. In terms of assembly, homohexamer.

Its subcellular location is the cytoplasm. It catalyses the reaction UMP + ATP = UDP + ADP. Its pathway is pyrimidine metabolism; CTP biosynthesis via de novo pathway; UDP from UMP (UMPK route): step 1/1. With respect to regulation, allosterically activated by GTP. Inhibited by UTP. Catalyzes the reversible phosphorylation of UMP to UDP. The polypeptide is Uridylate kinase (Synechococcus sp. (strain CC9605)).